A 610-amino-acid chain; its full sequence is UvrABC system protein C (610 aa).

The 79-residue stretch at 16–94 folds into the GIY-YIG domain; sequence SQPGVYRMYD…IKLYQPRYNV (79 aa). Residues 204 to 239 form the UVR domain; that stretch reads DQVLTQLISRMETASQNLEFEEAARIRDQIQAVRRV.

This sequence belongs to the UvrC family. In terms of assembly, interacts with UvrB in an incision complex.

The protein localises to the cytoplasm. The UvrABC repair system catalyzes the recognition and processing of DNA lesions. UvrC both incises the 5' and 3' sides of the lesion. The N-terminal half is responsible for the 3' incision and the C-terminal half is responsible for the 5' incision. The chain is UvrABC system protein C from Escherichia coli (strain UTI89 / UPEC).